Here is a 1633-residue protein sequence, read N- to C-terminus: Serine-aspartate repeat-containing protein F (1633 aa).

The first 45 residues, 1–45, serve as a signal peptide directing secretion; sequence MKKRRQGPINKRVDFLSNKVNKYSIRKFTVGTASILVGATLMFGA. The segment at 46-678 is ligand binding A region; it reads ADNEAKAAED…GSSTAQGDNP (633 aa). Residues 51–269 are disordered; the sequence is KAAEDNQLES…SISTDSSVND (219 aa). Basic and acidic residues predominate over residues 61–74; that stretch reads ASKEEQKGSRDNES. Composition is skewed to polar residues over residues 85–99 and 146–168; these read GSHSSEKTTNVNNAT and PKTSTTQQDSTEKNNPSLKDNLN. Residues 175–184 show a composition bias toward basic and acidic residues; that stretch reads KESKTDEHST. The span at 186–226 shows a compositional bias: polar residues; that stretch reads QAQMSTNKSNLDTNDSPTQSEKTSSQANNDSTDNQSAPSKQ. Positions 227–253 are enriched in basic and acidic residues; it reads LDSKPSEQKVYKTKFNDEPTQDVEHTT. Polar residues predominate over residues 255-266; sequence KLKTPSISTDSS. CNA-B domains are found at residues 679–797, 798–907, 908–1018, and 1019–1129; these read TYSL…YLTP, KYNV…FYKP, IYNL…YKTP, and KYSV…FDDD. A type I collagen binding region region spans residues 679–1129; it reads TYSLGDYVWL…SIDNGYFDDD (451 aa). The segment at 862 to 889 is disordered; the sequence is FETPEGYTPTKQNSGSDEGKDSNGTKTT. The interval 1085-1608 is disordered; it reads KPEGMTQTTA…ANEDHDSKGT (524 aa). Residues 1107-1119 are compositionally biased toward basic and acidic residues; it reads EDVRVTITDHDDF. Acidic residues predominate over residues 1125–1584; that stretch reads YFDDDSDSDS…DSDSDSDSDS (460 aa). A compositionally biased stretch (basic and acidic residues) spans 1585 to 1606; the sequence is DSDKNAKDKLPDTGANEDHDSK. The LPXTG sorting signal motif lies at 1594 to 1598; it reads LPDTG. The residue at position 1597 (Thr-1597) is a Pentaglycyl murein peptidoglycan amidated threonine. Residues 1598-1633 constitute a propeptide, removed by sortase; that stretch reads GANEDHDSKGTLLGTLFAGLGALLLGRRRKKDNKEK.

It belongs to the serine-aspartate repeat-containing protein (SDr) family.

The protein localises to the secreted. It localises to the cell wall. In terms of biological role, binds to type I collagen via alpha-2(I) or alpha-1(I) chains. This chain is Serine-aspartate repeat-containing protein F (sdrF), found in Staphylococcus epidermidis (strain ATCC 12228 / FDA PCI 1200).